A 487-amino-acid polypeptide reads, in one-letter code: Cyclic AMP-dependent transcription factor ATF-2 (487 aa).

The C2H2-type zinc-finger motif lies at 7 to 31; it reads FLCTAPGCGQRFTNEDHLAVHKHKH. Thr-34 carries the post-translational modification Phosphothreonine; by PKC/PRKCH. Residue Ser-44 is modified to Phosphoserine. Thr-51 is modified (phosphothreonine; by MAPK11 and MAPK14). At Thr-53 the chain carries Phosphothreonine; by MAPK1, MAPK3, MAPK11, MAPK12, MAPK14 and PLK3. A Phosphothreonine; by VRK1 modification is found at Thr-55. Residues Ser-72 and Ser-94 each carry the phosphoserine modification. Thr-98 is subject to Phosphothreonine. At Ser-103 the chain carries Phosphoserine; by PKC/PRKCA and PKC/PRKCB. Disordered stretches follow at residues 106–137 and 241–355; these read EEPS…PLAQ and PGIP…RQKR. Phosphoserine is present on Ser-118. Residues 264–275 show a composition bias toward polar residues; that stretch reads LTQQHPPVTNGD. Residues 278-281 form an essential for its histone acetyltransferase activity region; sequence KGHG. A compositionally biased stretch (low complexity) spans 300–316; sequence PATSTTETPASPAHTTP. Residue Ser-310 is modified to Phosphoserine. Ser-322 is modified (phosphoserine; by PKC/PRKCA and PKC/PRKCB). The span at 328–345 shows a compositional bias: basic and acidic residues; it reads AANEDPDEKRRKFLERNR. The bZIP domain maps to 334–397; that stretch reads DEKRRKFLER…AQLKQLLLAH (64 aa). Residues 336–356 form a basic motif region; that stretch reads KRRKFLERNRAAASRCRQKRK. Position 339 is an N6-acetyllysine (Lys-339). Ser-349 is subject to Phosphoserine; by PKC/PRKCA and PKC/PRKCB. Lys-356 bears the N6-acetyllysine mark. The tract at residues 362–390 is leucine-zipper; sequence LEKKAEDLSSLNGQLQSEVTLLRNEVAQL. A Nuclear export signal motif is present at residues 387 to 396; the sequence is VAQLKQLLLA. The disordered stretch occupies residues 407–453; the sequence is KKSGYHTADKDDSSEDLSVPSSPHTEAIQHSSVSTSNGVSSTSKAEA. Phosphoserine occurs at positions 424 and 428. The segment covering 425-436 has biased composition (polar residues); sequence VPSSPHTEAIQH. Residues 437–449 are compositionally biased toward low complexity; it reads SSVSTSNGVSSTS. Residues Ser-472 and Ser-480 each carry the phosphoserine; by ATM modification.

It belongs to the bZIP family. ATF subfamily. Binds DNA as a dimer and can form a homodimer in the absence of DNA. Can form a heterodimer with JUN. Heterodimerization is essential for its transcriptional activity. Interacts with SMAD3 and SMAD4. Interacts with the HK1/VDAC1 complex. Interacts with NBN, MRE11, XPO1, KAT5 and CUL3. Binds through its N-terminal region to UTF1 which acts as a coactivator of ATF2 transcriptional activity. Phosphorylation of Thr-51 by MAPK14 and MAPK11, and at Thr-53 by MAPK1/ERK2, MAPK3/ERK1, MAPK11, MAPK12 and MAPK14 in response to external stimulus like insulin causes increased transcriptional activity. Phosphorylated by PLK3 following hyperosmotic stress. Also phosphorylated and activated by JNK and CaMK4. ATM-mediated phosphorylation at Ser-472 and Ser-480 stimulates its function in DNA damage response. Phosphorylation at Ser-44, Thr-55 and Ser-103 activates its transcriptional activity. Phosphorylation at Thr-51 or Thr-53 enhances acetylation of histones H2B and H4.

The protein resides in the nucleus. It localises to the cytoplasm. It is found in the mitochondrion outer membrane. In terms of biological role, transcriptional activator which regulates the transcription of various genes, including those involved in anti-apoptosis, cell growth, and DNA damage response. Dependent on its binding partner, binds to CRE (cAMP response element) consensus sequences (5'-TGACGTCA-3') or to AP-1 (activator protein 1) consensus sequences (5'-TGACTCA-3'). In the nucleus, contributes to global transcription and the DNA damage response, in addition to specific transcriptional activities that are related to cell development, proliferation and death. In the cytoplasm, interacts with and perturbs HK1- and VDAC1-containing complexes at the mitochondrial outer membrane, thereby impairing mitochondrial membrane potential, inducing mitochondrial leakage and promoting cell death. The phosphorylated form (mediated by ATM) plays a role in the DNA damage response and is involved in the ionizing radiation (IR)-induced S phase checkpoint control and in the recruitment of the MRN complex into the IR-induced foci (IRIF). Exhibits histone acetyltransferase (HAT) activity which specifically acetylates histones H2B and H4 in vitro. In concert with CUL3 and RBX1, promotes the degradation of KAT5 thereby attenuating its ability to acetylate and activate ATM. Can elicit oncogenic or tumor suppressor activities depending on the tissue or cell type. This Mus musculus (Mouse) protein is Cyclic AMP-dependent transcription factor ATF-2 (Atf2).